Here is a 413-residue protein sequence, read N- to C-terminus: Alpha-1-antitrypsin-like protein CM55-SI (413 aa).

Residues 1-24 (MPSSISWGLLLLAALSCLGPGSLA) form the signal peptide. Gln25 is modified (pyrrolidone carboxylic acid). N-linked (GlcNAc...) asparagine glycosylation is found at Asn65, Asn102, Asn165, and Asn266. Residues 368–387 (GGTVLGNIRSILRYEVIFDR) form an RCL region.

The protein belongs to the serpin family. As to expression, expressed in liver.

This chain is Alpha-1-antitrypsin-like protein CM55-SI, found in Tamias sibiricus (Siberian chipmunk).